The sequence spans 256 residues: Thiazole synthase (256 aa).

Lys-95 serves as the catalytic Schiff-base intermediate with DXP. 1-deoxy-D-xylulose 5-phosphate is bound by residues Gly-156, 182–183 (AG), and 204–205 (NT).

It belongs to the ThiG family. As to quaternary structure, homotetramer. Forms heterodimers with either ThiH or ThiS.

The protein localises to the cytoplasm. It carries out the reaction [ThiS sulfur-carrier protein]-C-terminal-Gly-aminoethanethioate + 2-iminoacetate + 1-deoxy-D-xylulose 5-phosphate = [ThiS sulfur-carrier protein]-C-terminal Gly-Gly + 2-[(2R,5Z)-2-carboxy-4-methylthiazol-5(2H)-ylidene]ethyl phosphate + 2 H2O + H(+). It functions in the pathway cofactor biosynthesis; thiamine diphosphate biosynthesis. In terms of biological role, catalyzes the rearrangement of 1-deoxy-D-xylulose 5-phosphate (DXP) to produce the thiazole phosphate moiety of thiamine. Sulfur is provided by the thiocarboxylate moiety of the carrier protein ThiS. In vitro, sulfur can be provided by H(2)S. In Cronobacter sakazakii (strain ATCC BAA-894) (Enterobacter sakazakii), this protein is Thiazole synthase.